A 309-amino-acid polypeptide reads, in one-letter code: 15-cis-phytoene synthase (309 aa).

Positions 290 to 309 (LTSRMRAHPPRPAHLWQRPL) are disordered.

Belongs to the phytoene/squalene synthase family. Requires ATP as cofactor. It depends on Mn(2+) as a cofactor. The cofactor is Mg(2+).

The enzyme catalyses 2 (2E,6E,10E)-geranylgeranyl diphosphate = 15-cis-phytoene + 2 diphosphate. It functions in the pathway carotenoid biosynthesis; phytoene biosynthesis. Inhibited by phosphate ions and squalestatin. In terms of biological role, involved in the biosynthesis of carotenoids. Catalyzes the condensation of two molecules of geranylgeranyl diphosphate (GGPP) to give prephytoene diphosphate (PPPP) and the subsequent rearrangement of the cyclopropylcarbinyl intermediate to yield the 15-cis-phytoene isomer. This chain is 15-cis-phytoene synthase (crtB), found in Pantoea ananas (Erwinia uredovora).